The primary structure comprises 368 residues: Histidinol-phosphate aminotransferase (368 aa).

An N6-(pyridoxal phosphate)lysine modification is found at Lys228.

The protein belongs to the class-II pyridoxal-phosphate-dependent aminotransferase family. Histidinol-phosphate aminotransferase subfamily. Requires pyridoxal 5'-phosphate as cofactor.

The enzyme catalyses L-histidinol phosphate + 2-oxoglutarate = 3-(imidazol-4-yl)-2-oxopropyl phosphate + L-glutamate. It functions in the pathway amino-acid biosynthesis; L-histidine biosynthesis; L-histidine from 5-phospho-alpha-D-ribose 1-diphosphate: step 7/9. This is Histidinol-phosphate aminotransferase from Methanosarcina mazei (strain ATCC BAA-159 / DSM 3647 / Goe1 / Go1 / JCM 11833 / OCM 88) (Methanosarcina frisia).